The chain runs to 66 residues: Large ribosomal subunit protein bL31 (66 aa).

Residues Cys-16, Cys-18, Cys-36, and Cys-39 each coordinate Zn(2+).

The protein belongs to the bacterial ribosomal protein bL31 family. Type A subfamily. Part of the 50S ribosomal subunit. Zn(2+) is required as a cofactor.

Its function is as follows. Binds the 23S rRNA. This is Large ribosomal subunit protein bL31 from Geobacillus kaustophilus (strain HTA426).